The sequence spans 119 residues: Large ribosomal subunit protein bL17 (119 aa).

The protein belongs to the bacterial ribosomal protein bL17 family. In terms of assembly, part of the 50S ribosomal subunit. Contacts protein L32.

This chain is Large ribosomal subunit protein bL17, found in Ureaplasma parvum serovar 3 (strain ATCC 27815 / 27 / NCTC 11736).